We begin with the raw amino-acid sequence, 748 residues long: Formate acetyltransferase (748 aa).

The region spanning 5–618 (NNHTNAWQGF…KTGNTPDGRK (614 aa)) is the PFL domain. Residue Cys412 is the S-acetylcysteine intermediate of the active site. The Cysteine radical intermediate role is filled by Cys413. Residues 625-748 (PGANPMHGRD…VISRTFHESM (124 aa)) enclose the Glycine radical domain. At Gly723 the chain carries Glycine radical.

This sequence belongs to the glycyl radical enzyme (GRE) family. PFL subfamily. In terms of assembly, homodimer.

Its subcellular location is the cytoplasm. It catalyses the reaction formate + acetyl-CoA = pyruvate + CoA. Its pathway is fermentation; pyruvate fermentation; formate from pyruvate: step 1/1. Functionally, catalyzes the conversion of pyruvate to formate and acetyl-CoA. The chain is Formate acetyltransferase (pflB) from Staphylococcus epidermidis (strain ATCC 35984 / DSM 28319 / BCRC 17069 / CCUG 31568 / BM 3577 / RP62A).